A 432-amino-acid chain; its full sequence is uncharacterized protein (432 aa).

A compositionally biased stretch (polar residues) spans 1–14 (MSDTTDVPENQKSP). Residues 1–42 (MSDTTDVPENQKSPKPSGKADKRKIEEKPENSSLKRKKFEDP) are disordered. A compositionally biased stretch (basic and acidic residues) spans 18–30 (GKADKRKIEEKPE). An S4 RNA-binding domain is found at 85-148 (RKMVEVFSGE…HEHPIRDLPI (64 aa)). Residue Asp199 is part of the active site.

This sequence belongs to the pseudouridine synthase RluA family.

This is an uncharacterized protein from Caenorhabditis elegans.